We begin with the raw amino-acid sequence, 440 residues long: Transposon Ty1-LR4 Gag polyprotein (440 aa).

Composition is skewed to polar residues over residues 1-10, 48-60, and 127-152; these read MESQQLSQHP, TKANSQQTTTPAS, and QSQFPQYPSSVGTPLSTPSPESGNTF. Disordered stretches follow at residues 1–93, 126–173, and 352–440; these read MESQ…MMTQ, PQSQ…RPPP, and GSRN…PGTY. The span at 153 to 165 shows a compositional bias: low complexity; sequence TDSSSADSDMTST. Positions 299 to 401 are RNA-binding; sequence NNGIHINNKV…NSKSKTARAH (103 aa). Residues 402-418 are compositionally biased toward low complexity; sequence NVSTSNNSPSTDNDSIS. Serine 416 carries the phosphoserine modification. Residues 419–428 are compositionally biased toward polar residues; sequence KSTTEPIQLN. The span at 429–440 shows a compositional bias: basic and acidic residues; it reads NKHDLHLRPGTY.

In terms of assembly, homotrimer.

It is found in the cytoplasm. Its function is as follows. Capsid protein (CA) is the structural component of the virus-like particle (VLP), forming the shell that encapsulates the retrotransposons dimeric RNA genome. The particles are assembled from trimer-clustered units and there are holes in the capsid shells that allow for the diffusion of macromolecules. CA also has nucleocapsid-like chaperone activity, promoting primer tRNA(i)-Met annealing to the multipartite primer-binding site (PBS), dimerization of Ty1 RNA and initiation of reverse transcription. This is Transposon Ty1-LR4 Gag polyprotein (TY1A-LR4) from Saccharomyces cerevisiae (strain ATCC 204508 / S288c) (Baker's yeast).